Reading from the N-terminus, the 209-residue chain is MLKRSIMTLYSGPLDIYSHQVRIVLAEKGVTVDIHNVDANHPSEDLIELNPYATLPTLVDRDLVLFESRVIMEYLDERFPHPPLLPVYPVARSRCRLLMYRIERNFYHSMKIIEEGTPKQAETEREFLTKELIELDPVFGEKTYFMNDDFTLVDCVMAPLLWRLPHLGVHVPPRAAKSMYKYKKLIFERESFKASLSESESELREVDGI.

One can recognise a GST N-terminal domain in the interval 5–83 (SIMTLYSGPL…YLDERFPHPP (79 aa)). The region spanning 88 to 203 (YPVARSRCRL…ASLSESESEL (116 aa)) is the GST C-terminal domain.

It belongs to the GST superfamily. HSP26 family.

In terms of biological role, forms an equimolar complex with the RNA polymerase holoenzyme (RNAP) but not with the core enzyme. The protein is Stringent starvation protein A homolog (sspA) of Coxiella burnetii (strain RSA 493 / Nine Mile phase I).